The following is a 97-amino-acid chain: Large ribosomal subunit protein uL23 (97 aa).

Belongs to the universal ribosomal protein uL23 family. In terms of assembly, part of the 50S ribosomal subunit. Contacts protein L29, and trigger factor when it is bound to the ribosome.

Its function is as follows. One of the early assembly proteins it binds 23S rRNA. One of the proteins that surrounds the polypeptide exit tunnel on the outside of the ribosome. Forms the main docking site for trigger factor binding to the ribosome. This Methylococcus capsulatus (strain ATCC 33009 / NCIMB 11132 / Bath) protein is Large ribosomal subunit protein uL23.